A 423-amino-acid polypeptide reads, in one-letter code: Serine/threonine-protein kinase ppk25 (423 aa).

Serine 36 and serine 38 each carry phosphoserine. The region spanning 53–305 (WIIKKTIGAG…LEQAAKFPWL (253 aa)) is the Protein kinase domain. ATP-binding positions include 59–67 (IGAGSMGKV) and lysine 82. Aspartate 175 serves as the catalytic Proton acceptor.

It belongs to the protein kinase superfamily. Ser/Thr protein kinase family.

The protein localises to the cytoplasm. The enzyme catalyses L-seryl-[protein] + ATP = O-phospho-L-seryl-[protein] + ADP + H(+). It carries out the reaction L-threonyl-[protein] + ATP = O-phospho-L-threonyl-[protein] + ADP + H(+). The sequence is that of Serine/threonine-protein kinase ppk25 (ppk25) from Schizosaccharomyces pombe (strain 972 / ATCC 24843) (Fission yeast).